The following is a 585-amino-acid chain: Lipoprotein LpqB (585 aa).

The signal sequence occupies residues 1 to 17 (MGRKLLGLLMLAVLLAG). Cys-18 carries the N-palmitoyl cysteine lipid modification. Cys-18 is lipidated: S-diacylglycerol cysteine. Disordered stretches follow at residues 24–46 (SSAP…KPTP) and 560–585 (PSAD…VLPG).

It belongs to the LpqB lipoprotein family.

The protein localises to the cell membrane. The protein is Lipoprotein LpqB of Mycobacterium paratuberculosis.